The primary structure comprises 194 residues: UPF0301 protein CBU_2093 (194 aa).

Belongs to the UPF0301 (AlgH) family.

The protein is UPF0301 protein CBU_2093 of Coxiella burnetii (strain RSA 493 / Nine Mile phase I).